The following is a 418-amino-acid chain: Serine hydroxymethyltransferase (418 aa).

(6S)-5,6,7,8-tetrahydrofolate contacts are provided by residues L121 and 125 to 127 (GHL). K230 bears the N6-(pyridoxal phosphate)lysine mark. Position 356–358 (356–358 (SPF)) interacts with (6S)-5,6,7,8-tetrahydrofolate.

This sequence belongs to the SHMT family. Homodimer. Pyridoxal 5'-phosphate serves as cofactor.

The protein localises to the cytoplasm. It carries out the reaction (6R)-5,10-methylene-5,6,7,8-tetrahydrofolate + glycine + H2O = (6S)-5,6,7,8-tetrahydrofolate + L-serine. Its pathway is one-carbon metabolism; tetrahydrofolate interconversion. The protein operates within amino-acid biosynthesis; glycine biosynthesis; glycine from L-serine: step 1/1. Its function is as follows. Catalyzes the reversible interconversion of serine and glycine with tetrahydrofolate (THF) serving as the one-carbon carrier. This reaction serves as the major source of one-carbon groups required for the biosynthesis of purines, thymidylate, methionine, and other important biomolecules. Also exhibits THF-independent aldolase activity toward beta-hydroxyamino acids, producing glycine and aldehydes, via a retro-aldol mechanism. This chain is Serine hydroxymethyltransferase, found in Shewanella woodyi (strain ATCC 51908 / MS32).